Here is a 660-residue protein sequence, read N- to C-terminus: Bifunctional polymyxin resistance protein ArnA (660 aa).

The interval 1-304 (MKTVVFAYHD…TLGLVQGSRL (304 aa)) is formyltransferase ArnAFT. Position 86–88 (86–88 (HLI)) interacts with (6R)-10-formyltetrahydrofolate. The Proton donor; for formyltransferase activity role is filled by His-104. (6R)-10-formyltetrahydrofolate is bound by residues Arg-114 and 136 to 140 (VKRAD). A dehydrogenase ArnADH region spans residues 314–660 (RRTRVLILGV…RTVDLTDKPS (347 aa)). NAD(+) contacts are provided by residues Asp-347 and 368-369 (DI). Residues Ala-393, Tyr-398, and 432 to 433 (TS) each bind UDP-alpha-D-glucuronate. Residue Glu-434 is the Proton acceptor; for decarboxylase activity of the active site. UDP-alpha-D-glucuronate contacts are provided by residues Arg-460, Asn-492, 526 to 535 (KLIDGGKQKR), and Tyr-613. Residue Arg-619 is the Proton donor; for decarboxylase activity of the active site.

It in the N-terminal section; belongs to the Fmt family. UDP-L-Ara4N formyltransferase subfamily. In the C-terminal section; belongs to the NAD(P)-dependent epimerase/dehydratase family. UDP-glucuronic acid decarboxylase subfamily. As to quaternary structure, homohexamer, formed by a dimer of trimers.

The catalysed reaction is UDP-alpha-D-glucuronate + NAD(+) = UDP-beta-L-threo-pentopyranos-4-ulose + CO2 + NADH. It catalyses the reaction UDP-4-amino-4-deoxy-beta-L-arabinose + (6R)-10-formyltetrahydrofolate = UDP-4-deoxy-4-formamido-beta-L-arabinose + (6S)-5,6,7,8-tetrahydrofolate + H(+). It functions in the pathway nucleotide-sugar biosynthesis; UDP-4-deoxy-4-formamido-beta-L-arabinose biosynthesis; UDP-4-deoxy-4-formamido-beta-L-arabinose from UDP-alpha-D-glucuronate: step 1/3. Its pathway is nucleotide-sugar biosynthesis; UDP-4-deoxy-4-formamido-beta-L-arabinose biosynthesis; UDP-4-deoxy-4-formamido-beta-L-arabinose from UDP-alpha-D-glucuronate: step 3/3. It participates in bacterial outer membrane biogenesis; lipopolysaccharide biosynthesis. Bifunctional enzyme that catalyzes the oxidative decarboxylation of UDP-glucuronic acid (UDP-GlcUA) to UDP-4-keto-arabinose (UDP-Ara4O) and the addition of a formyl group to UDP-4-amino-4-deoxy-L-arabinose (UDP-L-Ara4N) to form UDP-L-4-formamido-arabinose (UDP-L-Ara4FN). The modified arabinose is attached to lipid A and is required for resistance to polymyxin and cationic antimicrobial peptides. The protein is Bifunctional polymyxin resistance protein ArnA of Escherichia coli O6:H1 (strain CFT073 / ATCC 700928 / UPEC).